We begin with the raw amino-acid sequence, 246 residues long: Phosphonates import ATP-binding protein PhnC (246 aa).

The ABC transporter domain occupies 2 to 246 (IKFENVSKIY…ILDEVYRKEA (245 aa)). 35 to 42 (GTSGAGKS) provides a ligand contact to ATP.

Belongs to the ABC transporter superfamily. Phosphonates importer (TC 3.A.1.9.1) family. The complex is composed of two ATP-binding proteins (PhnC), two transmembrane proteins (PhnE) and a solute-binding protein (PhnD).

The protein resides in the cell membrane. It catalyses the reaction phosphonate(out) + ATP + H2O = phosphonate(in) + ADP + phosphate + H(+). Its function is as follows. Part of the ABC transporter complex PhnCDE involved in phosphonates import. Responsible for energy coupling to the transport system. The protein is Phosphonates import ATP-binding protein PhnC of Lactococcus lactis subsp. lactis (strain IL1403) (Streptococcus lactis).